The chain runs to 60 residues: Large ribosomal subunit protein bL32 (60 aa).

Disordered stretches follow at residues 1-22 and 34-60; these read MAVQ…HNAL and GETH…KSEA. Over residues 9-19 the composition is skewed to basic residues; that stretch reads SPSKRGMHRSH.

Belongs to the bacterial ribosomal protein bL32 family.

The protein is Large ribosomal subunit protein bL32 of Variovorax paradoxus (strain S110).